The primary structure comprises 173 residues: MDVTIQHPWFKRALGPFYPSRLFDQFFGEGLFEYDLLPFLSSTISPYYRQSLFRTVLDSGISEVRSDRDQFVILLDVKHFSPEDLTVKVQDDFVEIHGKHNERQDDHGYISREFHRRYRLPSNVDQSALSCSLSADGMLTFCGPKIQSGMDASHSERAIPVSREEKPSSAPSS.

The residue at position 1 (Met1) is an N-acetylmethionine. The tract at residues 1–63 (MDVTIQHPWF…RTVLDSGISE (63 aa)) is required for complex formation with BFSP1 and BFSP2. Gln6 bears the Deamidated glutamine; partial mark. Position 45 is a phosphoserine (Ser45). Residues Gln50 and Gln90 each carry the deamidated glutamine; partial modification. The region spanning 52 to 162 (LFRTVLDSGI…SHSERAIPVS (111 aa)) is the sHSP domain. N6-acetyllysine is present on Lys99. His100 contacts Zn(2+). A Deamidated asparagine; partial modification is found at Asn101. Residues Glu102 and His107 each coordinate Zn(2+). Phosphoserine is present on Ser122. Asn123 carries the deamidated asparagine; partial modification. Cys131 and Cys142 are joined by a disulfide. At Gln147 the chain carries Deamidated glutamine; partial. The tract at residues 149–173 (GMDASHSERAIPVSREEKPSSAPSS) is disordered. Residues 153-167 (SHSERAIPVSREEKP) show a composition bias toward basic and acidic residues. His154 provides a ligand contact to Zn(2+). O-linked (GlcNAc) serine glycosylation is present at Ser162.

Belongs to the small heat shock protein (HSP20) family. Heteromer composed of three CRYAA and one CRYAB subunits. Inter-subunit bridging via zinc ions enhances stability, which is crucial as there is no protein turn over in the lens. Can also form homodimers and homotetramers (dimers of dimers) which serve as the building blocks of homooligomers. Within homooligomers, the zinc-binding motif is created from residues of 3 different molecules. His-100 and Glu-102 from one molecule are ligands of the zinc ion, and His-107 and His-154 residues from additional molecules complete the site with tetrahedral coordination geometry. Part of a complex required for lens intermediate filament formation composed of BFSP1, BFSP2 and CRYAA. In terms of processing, undergoes age-dependent proteolytical cleavage at the C-terminus.

It is found in the cytoplasm. The protein resides in the nucleus. In terms of biological role, contributes to the transparency and refractive index of the lens. In its oxidized form (absence of intramolecular disulfide bond), acts as a chaperone, preventing aggregation of various proteins under a wide range of stress conditions. Required for the correct formation of lens intermediate filaments as part of a complex composed of BFSP1, BFSP2 and CRYAA. The sequence is that of Alpha-crystallin A chain (CRYAA) from Loxodonta africana (African elephant).